Consider the following 430-residue polypeptide: Asparagine--tRNA ligase (430 aa).

This sequence belongs to the class-II aminoacyl-tRNA synthetase family. Homodimer.

The protein resides in the cytoplasm. It carries out the reaction tRNA(Asn) + L-asparagine + ATP = L-asparaginyl-tRNA(Asn) + AMP + diphosphate + H(+). The protein is Asparagine--tRNA ligase of Staphylococcus aureus (strain MSSA476).